Here is a 150-residue protein sequence, read N- to C-terminus: Non-specific lipid transfer protein GPI-anchored 7 (150 aa).

A signal peptide spans 1–25 (MTKTMMIFAAAMTVMALLLVPTIEA). Intrachain disulfides connect cysteine 29–cysteine 66, cysteine 36–cysteine 50, cysteine 51–cysteine 92, and cysteine 64–cysteine 101. Asparagine 41, asparagine 79, and asparagine 93 each carry an N-linked (GlcNAc...) asparagine glycan. A disordered region spans residues 103 to 125 (AKGAPSPKASLPPPAPAGNTKKD). Aspartate 125 is lipidated: GPI-anchor amidated aspartate. Positions 126–150 (AGAGNKLAGYGVTTVILSLISSIFF) are cleaved as a propeptide — removed in mature form.

This sequence belongs to the plant LTP family. As to expression, up-regulated in the epidermis of stems.

Its subcellular location is the cell membrane. Probable lipid transfer protein. This Arabidopsis thaliana (Mouse-ear cress) protein is Non-specific lipid transfer protein GPI-anchored 7.